The sequence spans 260 residues: Methylphosphonate hydroxylase (260 aa).

A 2-oxoglutarate-binding site is contributed by lysine 107. The Fe cation site is built by histidine 117, aspartate 119, and histidine 195.

It belongs to the PhyH family. Fe(2+) is required as a cofactor.

The enzyme catalyses methylphosphonate + 2-oxoglutarate + O2 = hydroxymethylphosphonate + succinate + CO2. Its function is as follows. Part of an oxidative pathway for utilization of methylphosphonic acid as a phosphate source. Catalyzes the conversion of methylphosphonic acid to hydroxymethylphosphonic acid. Is specific for the hydroxylation of methylphosphonate. In Gimesia maris (strain ATCC 29201 / DSM 8797 / 534-30) (Planctomyces maris), this protein is Methylphosphonate hydroxylase.